The primary structure comprises 356 residues: Glycerol-1-phosphate dehydrogenase [NAD(P)+] (356 aa).

NAD(+) is bound by residues 103–107 (GRSID) and 125–128 (TAAS). A substrate-binding site is contributed by D130. S134 lines the NAD(+) pocket. Substrate is bound at residue D177. Zn(2+)-binding residues include D177 and H257. H261 is a substrate binding site. Zn(2+) is bound at residue H273.

It belongs to the glycerol-1-phosphate dehydrogenase family. It depends on Zn(2+) as a cofactor.

Its subcellular location is the cytoplasm. It catalyses the reaction sn-glycerol 1-phosphate + NAD(+) = dihydroxyacetone phosphate + NADH + H(+). The enzyme catalyses sn-glycerol 1-phosphate + NADP(+) = dihydroxyacetone phosphate + NADPH + H(+). It functions in the pathway membrane lipid metabolism; glycerophospholipid metabolism. Catalyzes the NAD(P)H-dependent reduction of dihydroxyacetonephosphate (DHAP or glycerone phosphate) to glycerol 1-phosphate (G1P). The G1P thus generated is used as the glycerophosphate backbone of phospholipids in the cellular membranes of Archaea. The protein is Glycerol-1-phosphate dehydrogenase [NAD(P)+] of Methanosarcina mazei (strain ATCC BAA-159 / DSM 3647 / Goe1 / Go1 / JCM 11833 / OCM 88) (Methanosarcina frisia).